A 266-amino-acid polypeptide reads, in one-letter code: Adaptin ear-binding coat-associated protein 2 (266 aa).

Disordered stretches follow at residues 165-198 (MRKK…KSST) and 245-266 (DFTK…WVQF). Ser-181 carries the phosphoserine modification. 2 consecutive short sequence motifs (WXXF motif) follow at residues 243 to 246 (WGDF) and 263 to 266 (WVQF). Low complexity predominate over residues 249-266 (STGSPSSQSQPGTGWVQF).

The protein belongs to the NECAP family. As to quaternary structure, interacts with AP1G1 and AP2A1 components of the adapter protein complexes AP-1 and AP-2. Interacts with the GAE domain proteins GGA1, GGA2 and GGA3. In terms of tissue distribution, expressed in brain, heart, kidney, liver, lung, skeletal muscles and testis (at protein level).

It is found in the cytoplasmic vesicle. It localises to the clathrin-coated vesicle membrane. Its subcellular location is the cell membrane. Its function is as follows. Involved in endocytosis. This Mus musculus (Mouse) protein is Adaptin ear-binding coat-associated protein 2 (Necap2).